The primary structure comprises 626 residues: Phosphomethylpyrimidine synthase (626 aa).

The segment at 1–22 (MTKQEKAINLSESAQVDQQSVQ) is disordered. A compositionally biased stretch (polar residues) spans 10–22 (LSESAQVDQQSVQ). Residues N232, M261, Y290, H326, 346–348 (SRG), 387–390 (DGLR), and E426 contribute to the substrate site. A Zn(2+)-binding site is contributed by H430. Y453 is a substrate binding site. Position 494 (H494) interacts with Zn(2+). [4Fe-4S] cluster is bound by residues C574, C577, and C582.

Belongs to the ThiC family. Homodimer. [4Fe-4S] cluster serves as cofactor.

The enzyme catalyses 5-amino-1-(5-phospho-beta-D-ribosyl)imidazole + S-adenosyl-L-methionine = 4-amino-2-methyl-5-(phosphooxymethyl)pyrimidine + CO + 5'-deoxyadenosine + formate + L-methionine + 3 H(+). Its pathway is cofactor biosynthesis; thiamine diphosphate biosynthesis. Its function is as follows. Catalyzes the synthesis of the hydroxymethylpyrimidine phosphate (HMP-P) moiety of thiamine from aminoimidazole ribotide (AIR) in a radical S-adenosyl-L-methionine (SAM)-dependent reaction. The protein is Phosphomethylpyrimidine synthase of Pseudomonas putida (strain GB-1).